Here is a 335-residue protein sequence, read N- to C-terminus: MCVKKIRKASIWATGSYLPEKILSNSDLEQMVDTSDEWIVTRTGIKERRIAAPGEYASIMGAKAAEKAIEKAGLTKDQIECIIFSTSAPDYIFPSSAALAQAYLGIKEVPAFDCMAACTGYLYGLSVAKALVESGAYNNVLLIAADKLSSFVNYEDRNTCVLFGDGGSACVVGESRPGALEITNVNLGADGSVADLLSLPAGGSRLPASPETVAEGKHFIYMEGKEVFKHAVRRMESAAKICIAEAGLAEGDIDWLVPHQANERIIDAIAKRFEIDESKVFKTLSKYGNTAASSVCIALDELLQLHVINSGEYLLLVAFGGGLSWGAVVLRQVEG.

Catalysis depends on residues Cys118 and His259. An ACP-binding region spans residues 260 to 264 (QANER). Asn289 is an active-site residue.

This sequence belongs to the thiolase-like superfamily. FabH family. Homodimer.

It is found in the cytoplasm. The enzyme catalyses malonyl-[ACP] + acetyl-CoA + H(+) = 3-oxobutanoyl-[ACP] + CO2 + CoA. The protein operates within lipid metabolism; fatty acid biosynthesis. Catalyzes the condensation reaction of fatty acid synthesis by the addition to an acyl acceptor of two carbons from malonyl-ACP. Catalyzes the first condensation reaction which initiates fatty acid synthesis and may therefore play a role in governing the total rate of fatty acid production. Possesses both acetoacetyl-ACP synthase and acetyl transacylase activities. Its substrate specificity determines the biosynthesis of branched-chain and/or straight-chain of fatty acids. This is Beta-ketoacyl-[acyl-carrier-protein] synthase III from Chlamydia caviae (strain ATCC VR-813 / DSM 19441 / 03DC25 / GPIC) (Chlamydophila caviae).